Reading from the N-terminus, the 170-residue chain is uncharacterized protein (170 aa).

The signal sequence occupies residues 1–26; that stretch reads MLKKKWMVGLLAGCLAAGGFSYNAFA.

This is an uncharacterized protein from Bacillus subtilis (strain 168).